We begin with the raw amino-acid sequence, 155 residues long: Transcription antitermination protein NusB (155 aa).

This sequence belongs to the NusB family.

Its function is as follows. Involved in transcription antitermination. Required for transcription of ribosomal RNA (rRNA) genes. Binds specifically to the boxA antiterminator sequence of the ribosomal RNA (rrn) operons. The sequence is that of Transcription antitermination protein NusB from Azoarcus sp. (strain BH72).